A 144-amino-acid chain; its full sequence is Large ribosomal subunit protein uL11 (144 aa).

This sequence belongs to the universal ribosomal protein uL11 family. In terms of assembly, part of the ribosomal stalk of the 50S ribosomal subunit. Interacts with L10 and the large rRNA to form the base of the stalk. L10 forms an elongated spine to which L12 dimers bind in a sequential fashion forming a multimeric L10(L12)X complex. In terms of processing, one or more lysine residues are methylated.

Its function is as follows. Forms part of the ribosomal stalk which helps the ribosome interact with GTP-bound translation factors. This Streptomyces coelicolor (strain ATCC BAA-471 / A3(2) / M145) protein is Large ribosomal subunit protein uL11.